The primary structure comprises 729 residues: Polyphosphate kinase (729 aa).

Residues 1-46 (MTEAQTRTEPSESSESSEAVAPAITSAADSAPEAPPATTAPAIENP) are disordered. Residues 25–42 (TSAADSAPEAPPATTAPA) are compositionally biased toward low complexity. Asparagine 90 is a binding site for ATP. Mg(2+)-binding residues include arginine 422 and arginine 452. The active-site Phosphohistidine intermediate is histidine 482. Tyrosine 515, arginine 611, and histidine 639 together coordinate ATP.

It belongs to the polyphosphate kinase 1 (PPK1) family. Mg(2+) serves as cofactor. An intermediate of this reaction is the autophosphorylated ppk in which a phosphate is covalently linked to a histidine residue through a N-P bond.

The catalysed reaction is [phosphate](n) + ATP = [phosphate](n+1) + ADP. Functionally, catalyzes the reversible transfer of the terminal phosphate of ATP to form a long-chain polyphosphate (polyP). The chain is Polyphosphate kinase from Mycolicibacterium gilvum (strain PYR-GCK) (Mycobacterium gilvum (strain PYR-GCK)).